We begin with the raw amino-acid sequence, 95 residues long: Secretoglobin family 2A member 2 (95 aa).

An N-terminal signal peptide occupies residues 1–18 (MKLVFLFLLVTIPICCYA). An N-linked (GlcNAc...) asparagine glycan is attached at N35.

This sequence belongs to the secretoglobin family. Lipophilin subfamily. Prostatein is composed of three different peptides called C1, C2 and C3. These form covalent C1:C3 (F) and C2:C3 (S) heterodimers whose non-covalent association forms tetrameric (C1:C3/C3:C2) prostatein molecules. As to expression, highly expressed in ventral prostate.

Its subcellular location is the secreted. Its function is as follows. Part of prostatein which is the major secretory glycoprotein of ventral prostate gland. Steroid-binding protein; can bind non-polar steroids, cholesterol and a group of small proline-rich peptides. This is Secretoglobin family 2A member 2 (Scgb2a2) from Rattus norvegicus (Rat).